The following is a 434-amino-acid chain: Cyclic 2,3-diphosphoglycerate synthetase (434 aa).

This sequence belongs to the cyclic 2,3-diphosphoglycerate synthetase family.

It is found in the cytoplasm. It catalyses the reaction (2R)-2,3-bisphosphoglycerate + ATP + H(+) = cyclic (2R)-2,3-bisphosphoglycerate + ADP + phosphate. Catalyzes the formation of cyclic 2,3-diphosphoglycerate (cDPG) by formation of an intramolecular phosphoanhydride bond at the expense of ATP. The chain is Cyclic 2,3-diphosphoglycerate synthetase from Thermococcus sibiricus (strain DSM 12597 / MM 739).